The primary structure comprises 538 residues: Cytochrome P450 monooxygenase fogE (538 aa).

A helical membrane pass occupies residues 4-24 (ASSAILLVALIAALWRLSLIG). Position 437 (Cys-437) interacts with heme.

Belongs to the cytochrome P450 family. Heme serves as cofactor.

It is found in the membrane. It participates in secondary metabolite biosynthesis. Cytochrome P450 monooxygenase; part of the gene cluster that mediates the biosynthesis of flavoglaucin and congeners (including aspergin, dihydroauroglaucin and auroglaucin), prenylated salicylaldehyde derivatives carrying a saturated or an unsaturated C-7 side chain. The PKS fogA releases the carboxylic acid (8E,10E,12E)-3,5,7-trihydroxytetradeca-8,10,12-trienoic acid as its product, as well as derivatives with one and two double bonds. FogA is indeed able to reduce the initial triketide, thus being at least partially responsible for the differently saturated heptyl side chains of flavoglaucin congeners. The oxidoreductases fogB, fogC and fogD modify the nascent polyketide in fogA-bound form and, together, fogA, fogB, fogC and fogD are necessary for the formation of the aromatic core and the cyclized PKS products are released as salicyl alcohols. In particular, fogB is responsible for oxidation of a hydroxyl group or reduction of remaining double bond(s) at the C-7 residue whereas fogD is probably involved in the reductive release of the modified PKS products. The cytochrome P450 monooxygenase fogE is then responsible for the hydroxylation at C-3 of the benzene ring. The fogE products are substrates of the prenyltransferase fogH and the prenylated benzyl alcohols are subsequently oxidized by the fogF to produce the final aryl aldehydes flavoglaucin and congeners. The short-chain dehydrogenase fogG does not seem to be involved in the biosynthesis of the prenylated salicylaldehyde derivatives. This chain is Cytochrome P450 monooxygenase fogE, found in Aspergillus ruber (strain CBS 135680).